Here is a 150-residue protein sequence, read N- to C-terminus: Large ribosomal subunit protein bL9 (150 aa).

It belongs to the bacterial ribosomal protein bL9 family.

In terms of biological role, binds to the 23S rRNA. This Streptococcus pyogenes serotype M6 (strain ATCC BAA-946 / MGAS10394) protein is Large ribosomal subunit protein bL9.